We begin with the raw amino-acid sequence, 341 residues long: Transcription factor VIP1 (341 aa).

Disordered stretches follow at residues 1 to 33 (MEGG…HRRA), 59 to 106 (SLDF…PEAR), and 135 to 156 (SSGE…DGEM). The tract at residues 1–162 (MEGGGRGPNQ…DGEMSSASFN (162 aa)) is necessary and sufficient for transient T-DNA transformation end expression. The segment covering 15–24 (EIEHMPEAPR) has biased composition (basic and acidic residues). Over residues 71 to 80 (QSQQQPQASP) the composition is skewed to low complexity. At Ser79 the chain carries Phosphoserine. The interval 163–341 (IESILASVSG…PSYMDFTKRG (179 aa)) is involved in homomultimerization and histone H2A binding. Positions 194-257 (DPKRAKRILA…SELNTENKHL (64 aa)) constitute a bZIP domain. The tract at residues 196 to 217 (KRAKRILANRQSAARSKERKIR) is basic motif. Positions 198–205 (AKRILANR) match the Nuclear localization signal motif. The segment at 222-257 (LERKVQTLQNEATTLSAQVTMLQRGTSELNTENKHL) is leucine-zipper. Positions 307-331 (SQQSAMNQFGNKTNQQMSTNGQPSL) are enriched in polar residues. The segment at 307–341 (SQQSAMNQFGNKTNQQMSTNGQPSLPSYMDFTKRG) is disordered.

It belongs to the bZIP family. Forms homomultimers. Interacts with Agrobacterium tumefaciens VirE2 and mediates its translocation to the host nucleus. Binds to VIP2. Forms a complex made of Agrobacterium VirE2, VIP1, VIP2 and single-stranded DNA (ssDNA). The interaction with KAP1 mediates its nuclear import. Binds to the H2A histone RAT5. Interacts with MPK3 and Agrobacterium virF. Forms a complex made of VIP1, VBF and Agrobacterium virE2. Interacts with SCF(VBF) E3 ubiquitin ligase complex. Binds directly to VBF. Forms heterodimers with BZIP34 and BZIP61. In terms of processing, phosphorylated by MPK3. This phosphorylation promotes nuclear localization. As to expression, mostly expressed in dividing cells, present in leaves, roots and seedlings.

Its subcellular location is the cytoplasm. It is found in the nucleus. In terms of biological role, transcription activator that binds specifically to the VIP1 response elements (VREs) DNA sequence 5'-ACNGCT-3' found in some stress genes (e.g. TRX8 and MYB44), when phosphorylated/activated by MPK3. Required for Agrobacterium VirE2 nuclear import and tumorigenicity. Promotes transient expression of T-DNA in early stages by interacting with VirE2 in complex with the T-DNA and facilitating its translocation to the nucleus, and mediates stable genetic transformation by Agrobacterium by binding H2A histone. Prevents cell differentiation and shoot formation. Limits sulfate utilization efficiency (SUE) and sulfate uptake, especially in low-sulfur conditions. Plays a role in osmosensory response by binding to the 5'-AGCTGT/G-3' DNA sequence found in the promoters of the hypoosmolarity-responsive genes CYP707A1 and CYP707A3. Involved in the negative regulation of touch-induced root bending and salt-dependent root bending. The sequence is that of Transcription factor VIP1 from Arabidopsis thaliana (Mouse-ear cress).